Here is a 276-residue protein sequence, read N- to C-terminus: Large ribosomal subunit protein uL2 (276 aa).

Disordered stretches follow at residues Arg26 to Cys45 and Ala224 to Lys276. Positions Arg259–Lys276 are enriched in basic residues.

Belongs to the universal ribosomal protein uL2 family. In terms of assembly, part of the 50S ribosomal subunit. Forms a bridge to the 30S subunit in the 70S ribosome.

Its function is as follows. One of the primary rRNA binding proteins. Required for association of the 30S and 50S subunits to form the 70S ribosome, for tRNA binding and peptide bond formation. It has been suggested to have peptidyltransferase activity; this is somewhat controversial. Makes several contacts with the 16S rRNA in the 70S ribosome. The protein is Large ribosomal subunit protein uL2 of Oleidesulfovibrio alaskensis (strain ATCC BAA-1058 / DSM 17464 / G20) (Desulfovibrio alaskensis).